We begin with the raw amino-acid sequence, 72 residues long: Large ribosomal subunit protein bL31 (72 aa).

The protein belongs to the bacterial ribosomal protein bL31 family. Type A subfamily. In terms of assembly, part of the 50S ribosomal subunit.

In terms of biological role, binds the 23S rRNA. This Prosthecochloris aestuarii (strain DSM 271 / SK 413) protein is Large ribosomal subunit protein bL31.